The sequence spans 528 residues: RNA polymerase sigma factor SigA (528 aa).

Positions 1-10 (MAATKASTAT) are enriched in polar residues. The segment at 1 to 211 (MAATKASTAT…FVWDEDESEA (211 aa)) is disordered. 3 stretches are compositionally biased toward low complexity: residues 19–31 (TKSPAASASGAKT), 38–56 (AKSASGSPPAKRATKPAAR), and 80–92 (AAKSAAAKAPSAR). The span at 100–109 (APKDAQHEAA) shows a compositional bias: basic and acidic residues. Residues 110–173 (TDPEDALDSV…DDEDHEDLEA (64 aa)) are compositionally biased toward acidic residues. The sigma-70 factor domain-2 stretch occupies residues 295 to 365 (LLEANLRLVV…TRAMADQART (71 aa)). The Interaction with polymerase core subunit RpoC signature appears at 319–322 (DLIQ). Residues 374-450 (EVINKLGRIQ…DSEAVVAVDA (77 aa)) form a sigma-70 factor domain-3 region. Residues 463-516 (VLDTLSEREAGVVRLRFGLTDGQPRTLDEIGQVYGVTRERIRQIESKTMSKLRH) are sigma-70 factor domain-4. The segment at residues 489–508 (LDEIGQVYGVTRERIRQIES) is a DNA-binding region (H-T-H motif).

Belongs to the sigma-70 factor family. RpoD/SigA subfamily. In terms of assembly, interacts transiently with the RNA polymerase catalytic core.

The protein localises to the cytoplasm. In terms of biological role, sigma factors are initiation factors that promote the attachment of RNA polymerase to specific initiation sites and are then released. This sigma factor is the primary sigma factor during exponential growth. The polypeptide is RNA polymerase sigma factor SigA (Mycobacterium bovis (strain ATCC BAA-935 / AF2122/97)).